The following is a 188-amino-acid chain: Elongation factor P (188 aa).

N6-(3,6-diaminohexanoyl)-5-hydroxylysine is present on Lys34.

The protein belongs to the elongation factor P family. In terms of processing, may be beta-lysylated on the epsilon-amino group of Lys-34 by the combined action of EpmA and EpmB, and then hydroxylated on the C5 position of the same residue by EpmC (if this protein is present). Lysylation is critical for the stimulatory effect of EF-P on peptide-bond formation. The lysylation moiety may extend toward the peptidyltransferase center and stabilize the terminal 3-CCA end of the tRNA. Hydroxylation of the C5 position on Lys-34 may allow additional potential stabilizing hydrogen-bond interactions with the P-tRNA.

It is found in the cytoplasm. The protein operates within protein biosynthesis; polypeptide chain elongation. In terms of biological role, involved in peptide bond synthesis. Alleviates ribosome stalling that occurs when 3 or more consecutive Pro residues or the sequence PPG is present in a protein, possibly by augmenting the peptidyl transferase activity of the ribosome. Modification of Lys-34 is required for alleviation. This chain is Elongation factor P, found in Klebsiella pneumoniae (strain 342).